A 236-amino-acid polypeptide reads, in one-letter code: 1-(5-phosphoribosyl)-5-[(5-phosphoribosylamino)methylideneamino] imidazole-4-carboxamide isomerase (236 aa).

Asp-8 serves as the catalytic Proton acceptor. Residue Asp-127 is the Proton donor of the active site.

It belongs to the HisA/HisF family.

The protein resides in the cytoplasm. It carries out the reaction 1-(5-phospho-beta-D-ribosyl)-5-[(5-phospho-beta-D-ribosylamino)methylideneamino]imidazole-4-carboxamide = 5-[(5-phospho-1-deoxy-D-ribulos-1-ylimino)methylamino]-1-(5-phospho-beta-D-ribosyl)imidazole-4-carboxamide. It participates in amino-acid biosynthesis; L-histidine biosynthesis; L-histidine from 5-phospho-alpha-D-ribose 1-diphosphate: step 4/9. The protein is 1-(5-phosphoribosyl)-5-[(5-phosphoribosylamino)methylideneamino] imidazole-4-carboxamide isomerase of Sulfurimonas denitrificans (strain ATCC 33889 / DSM 1251) (Thiomicrospira denitrificans (strain ATCC 33889 / DSM 1251)).